A 329-amino-acid chain; its full sequence is DNA-directed RNA polymerase subunit alpha (329 aa).

The tract at residues 1-235 (MQGSVTEFLK…EQLDAFVDLR (235 aa)) is alpha N-terminal domain (alpha-NTD). Residues 249-329 (FDPILLRPVD…NWPPASIAED (81 aa)) form an alpha C-terminal domain (alpha-CTD) region.

The protein belongs to the RNA polymerase alpha chain family. As to quaternary structure, homodimer. The RNAP catalytic core consists of 2 alpha, 1 beta, 1 beta' and 1 omega subunit. When a sigma factor is associated with the core the holoenzyme is formed, which can initiate transcription.

The enzyme catalyses RNA(n) + a ribonucleoside 5'-triphosphate = RNA(n+1) + diphosphate. Functionally, DNA-dependent RNA polymerase catalyzes the transcription of DNA into RNA using the four ribonucleoside triphosphates as substrates. The sequence is that of DNA-directed RNA polymerase subunit alpha from Mannheimia succiniciproducens (strain KCTC 0769BP / MBEL55E).